Consider the following 37-residue polypeptide: Large ribosomal subunit protein bL36B (37 aa).

It belongs to the bacterial ribosomal protein bL36 family.

The protein is Large ribosomal subunit protein bL36B of Aeromonas salmonicida (strain A449).